A 219-amino-acid polypeptide reads, in one-letter code: tRNA (guanine-N(7)-)-methyltransferase (219 aa).

Positions 43, 68, 101, and 124 each coordinate S-adenosyl-L-methionine. Substrate is bound by residues lysine 128 and aspartate 160.

It belongs to the class I-like SAM-binding methyltransferase superfamily. TrmB family.

It catalyses the reaction guanosine(46) in tRNA + S-adenosyl-L-methionine = N(7)-methylguanosine(46) in tRNA + S-adenosyl-L-homocysteine. It functions in the pathway tRNA modification; N(7)-methylguanine-tRNA biosynthesis. Catalyzes the formation of N(7)-methylguanine at position 46 (m7G46) in tRNA. This is tRNA (guanine-N(7)-)-methyltransferase from Clostridium botulinum (strain Alaska E43 / Type E3).